The sequence spans 160 residues: Major pollen allergen Cor a 1 isoforms 5, 6, 11 and 16 (160 aa).

Belongs to the BetVI family.

This is Major pollen allergen Cor a 1 isoforms 5, 6, 11 and 16 from Corylus avellana (European hazel).